A 359-amino-acid polypeptide reads, in one-letter code: MRNRFGCLFSLTTWGESHGPSIGLVIDGCPAGLPLSLEDFVPVMLRRSPGRLGTSQRKEADIVHILSGVYQGKTTGTPIALQIFNTDIDSETYRKQDDRYRPGHGQFAYEKKYGIVDPLGGGRSSARETACRVAAGVVAAKLLAHYDIYCLAFLSKLGKESIKEYPQFTHEFAQSVYSSPFLSPLASDTITKQLMDLQKEKDSLGGVVSFITSPIHESLGEPIFYKVQAVLASALMSIPAAKGFEIGLGFASADKYGSEYIDPFIFEEGKISMSSNNCGGSLGGITMGMPLNGRVAFKPTSSIKQPRLTVMKTGEPTVYSTPKEGRHDPCVAIRAVGVVEAMVNLVLADLLLQQRCSRL.

Arginine 47 is a binding site for NADP(+). Residues 123–125 (RSS), glycine 283, 298–302 (KPTSS), and arginine 326 contribute to the FMN site.

This sequence belongs to the chorismate synthase family. Homotetramer. Requires FMNH2 as cofactor.

It catalyses the reaction 5-O-(1-carboxyvinyl)-3-phosphoshikimate = chorismate + phosphate. Its pathway is metabolic intermediate biosynthesis; chorismate biosynthesis; chorismate from D-erythrose 4-phosphate and phosphoenolpyruvate: step 7/7. Catalyzes the anti-1,4-elimination of the C-3 phosphate and the C-6 proR hydrogen from 5-enolpyruvylshikimate-3-phosphate (EPSP) to yield chorismate, which is the branch point compound that serves as the starting substrate for the three terminal pathways of aromatic amino acid biosynthesis. This reaction introduces a second double bond into the aromatic ring system. The chain is Chorismate synthase from Chlamydia felis (strain Fe/C-56) (Chlamydophila felis).